Reading from the N-terminus, the 155-residue chain is Probable ribosome biogenesis protein RLP24 (155 aa).

Belongs to the eukaryotic ribosomal protein eL24 family.

The chain is Probable ribosome biogenesis protein RLP24 (RPL24) from Encephalitozoon cuniculi (strain GB-M1) (Microsporidian parasite).